Consider the following 453-residue polypeptide: Allantoinase (453 aa).

Residues H59, H61, K146, H186, H242, and D315 each contribute to the Zn(2+) site. An N6-carboxylysine modification is found at K146.

This sequence belongs to the metallo-dependent hydrolases superfamily. Allantoinase family. In terms of assembly, homotetramer. The cofactor is Zn(2+). In terms of processing, carboxylation allows a single lysine to coordinate two zinc ions.

It carries out the reaction (S)-allantoin + H2O = allantoate + H(+). It functions in the pathway nitrogen metabolism; (S)-allantoin degradation; allantoate from (S)-allantoin: step 1/1. Functionally, catalyzes the conversion of allantoin (5-ureidohydantoin) to allantoic acid by hydrolytic cleavage of the five-member hydantoin ring. The protein is Allantoinase of Escherichia coli (strain 55989 / EAEC).